Here is a 379-residue protein sequence, read N- to C-terminus: D-threonine aldolase (379 aa).

K59 carries the N6-(pyridoxal phosphate)lysine modification.

This sequence belongs to the DSD1 family. Requires pyridoxal 5'-phosphate as cofactor. Mn(2+) serves as cofactor. It depends on Co(2+) as a cofactor. Ni(2+) is required as a cofactor. The cofactor is Mg(2+).

The enzyme catalyses D-threonine = acetaldehyde + glycine. It catalyses the reaction D-allo-threonine = acetaldehyde + glycine. Its activity is regulated as follows. Inhibited by the carbonyl reagents hydroxylamine, phenylhydrazine and semicarbazide. Inhibited by the chelating agent EDTA. Inhibited by the sulfhydryl reagent p-chloromercuribenzoic acid, and by sodium cyanide. Inhibited by iodoacetate, Ag(2)SO(4), HgCl(2) and CdCl(2). Competitively inhibited by beta-hydroxyaspartate and O-phospho-DL-threonine. Catalyzes the reversible cleavage of D-threonine or D-allothreonine into glycine and acetaldehyde. Can also cleave D-beta-phenylserine, D-beta-hydroxy-alpha-aminovaleric acid, D-beta-3,4-dihydroxyphenylserine and D-beta-3,4-methylenedioxyphenylserine into glycine and the corresponding aldehyde compounds. Inactive towards D-serine, beta-hydroxyaspartate and O-phospho-DL-threonine. The chain is D-threonine aldolase from Arthrobacter sp.